The sequence spans 428 residues: Adenylosuccinate synthetase (428 aa).

GTP is bound by residues 12–18 (GDEGKGK) and 40–42 (GHT). The active-site Proton acceptor is the Asp13. The Mg(2+) site is built by Asp13 and Gly40. IMP contacts are provided by residues 13-16 (DEGK), 38-41 (NAGH), Thr128, Arg142, Gln222, Thr237, and Arg301. His41 functions as the Proton donor in the catalytic mechanism. 297–303 (VNTGRAR) serves as a coordination point for substrate. Residues Arg303, 329–331 (KLD), and 411–413 (STS) each bind GTP.

It belongs to the adenylosuccinate synthetase family. Homodimer. Requires Mg(2+) as cofactor.

It localises to the cytoplasm. It carries out the reaction IMP + L-aspartate + GTP = N(6)-(1,2-dicarboxyethyl)-AMP + GDP + phosphate + 2 H(+). It participates in purine metabolism; AMP biosynthesis via de novo pathway; AMP from IMP: step 1/2. Its function is as follows. Plays an important role in the de novo pathway of purine nucleotide biosynthesis. Catalyzes the first committed step in the biosynthesis of AMP from IMP. This is Adenylosuccinate synthetase from Caulobacter sp. (strain K31).